A 263-amino-acid polypeptide reads, in one-letter code: tRNA pseudouridine synthase A (263 aa).

Catalysis depends on Asp53, which acts as the Nucleophile. Tyr111 is a binding site for substrate. The segment at 232-263 is disordered; sequence TAPGHGLISGRSNMTNGKLENNKTTNPCVTKY. Polar residues predominate over residues 241-263; the sequence is GRSNMTNGKLENNKTTNPCVTKY.

It belongs to the tRNA pseudouridine synthase TruA family. As to quaternary structure, homodimer.

It carries out the reaction uridine(38/39/40) in tRNA = pseudouridine(38/39/40) in tRNA. In terms of biological role, formation of pseudouridine at positions 38, 39 and 40 in the anticodon stem and loop of transfer RNAs. This chain is tRNA pseudouridine synthase A, found in Halalkalibacterium halodurans (strain ATCC BAA-125 / DSM 18197 / FERM 7344 / JCM 9153 / C-125) (Bacillus halodurans).